The chain runs to 752 residues: Translation initiation factor IF-2 (752 aa).

Positions 148–159 (KKVKDKNKKEEP) are enriched in basic and acidic residues. The disordered stretch occupies residues 148 to 170 (KKVKDKNKKEEPAVTPSTAPRKK). In terms of domain architecture, tr-type G spans 250-419 (PRPPIVTVMG…ALQAEIMELK (170 aa)). A G1 region spans residues 259-266 (GHVDHGKT). 259 to 266 (GHVDHGKT) lines the GTP pocket. Residues 284 to 288 (GITQH) are G2. The tract at residues 305-308 (DTPG) is G3. GTP-binding positions include 305-309 (DTPGH) and 359-362 (NKID). The segment at 359–362 (NKID) is G4. Positions 395 to 397 (SAK) are G5.

Belongs to the TRAFAC class translation factor GTPase superfamily. Classic translation factor GTPase family. IF-2 subfamily.

The protein localises to the cytoplasm. One of the essential components for the initiation of protein synthesis. Protects formylmethionyl-tRNA from spontaneous hydrolysis and promotes its binding to the 30S ribosomal subunits. Also involved in the hydrolysis of GTP during the formation of the 70S ribosomal complex. This is Translation initiation factor IF-2 from Thermodesulfovibrio yellowstonii (strain ATCC 51303 / DSM 11347 / YP87).